Here is a 476-residue protein sequence, read N- to C-terminus: Bifunctional protein HldE (476 aa).

A ribokinase region spans residues 1-319 (MKISLPAFEK…AALNLSHGES (319 aa)). Residue 195 to 198 (NMSE) coordinates ATP. The active site involves Asp264. The cytidylyltransferase stretch occupies residues 345–476 (MTNGCFDILH…AIIENIMAKQ (132 aa)).

In the N-terminal section; belongs to the carbohydrate kinase PfkB family. This sequence in the C-terminal section; belongs to the cytidylyltransferase family. As to quaternary structure, homodimer.

The enzyme catalyses D-glycero-beta-D-manno-heptose 7-phosphate + ATP = D-glycero-beta-D-manno-heptose 1,7-bisphosphate + ADP + H(+). The catalysed reaction is D-glycero-beta-D-manno-heptose 1-phosphate + ATP + H(+) = ADP-D-glycero-beta-D-manno-heptose + diphosphate. Its pathway is nucleotide-sugar biosynthesis; ADP-L-glycero-beta-D-manno-heptose biosynthesis; ADP-L-glycero-beta-D-manno-heptose from D-glycero-beta-D-manno-heptose 7-phosphate: step 1/4. It functions in the pathway nucleotide-sugar biosynthesis; ADP-L-glycero-beta-D-manno-heptose biosynthesis; ADP-L-glycero-beta-D-manno-heptose from D-glycero-beta-D-manno-heptose 7-phosphate: step 3/4. Functionally, catalyzes the phosphorylation of D-glycero-D-manno-heptose 7-phosphate at the C-1 position to selectively form D-glycero-beta-D-manno-heptose-1,7-bisphosphate. Its function is as follows. Catalyzes the ADP transfer from ATP to D-glycero-beta-D-manno-heptose 1-phosphate, yielding ADP-D-glycero-beta-D-manno-heptose. The sequence is that of Bifunctional protein HldE from Shewanella loihica (strain ATCC BAA-1088 / PV-4).